A 77-amino-acid polypeptide reads, in one-letter code: Protein RALF-like 17 (77 aa).

A signal peptide spans 1-29 (MAASREFIICCFLTLLLCNFFMRVESGAA). An intrachain disulfide couples Cys-37 to Cys-51.

Belongs to the plant rapid alkalinization factor (RALF) family.

The protein resides in the secreted. Its function is as follows. Cell signaling peptide that may regulate plant stress, growth, and development. Mediates a rapid alkalinization of extracellular space by mediating a transient increase in the cytoplasmic Ca(2+) concentration leading to a calcium-dependent signaling events through a cell surface receptor and a concomitant activation of some intracellular mitogen-activated protein kinases. This Arabidopsis thaliana (Mouse-ear cress) protein is Protein RALF-like 17 (RALFL17).